The chain runs to 129 residues: Small ribosomal subunit protein uS11 (129 aa).

This sequence belongs to the universal ribosomal protein uS11 family. In terms of assembly, part of the 30S ribosomal subunit. Interacts with proteins S7 and S18. Binds to IF-3.

Its function is as follows. Located on the platform of the 30S subunit, it bridges several disparate RNA helices of the 16S rRNA. Forms part of the Shine-Dalgarno cleft in the 70S ribosome. The chain is Small ribosomal subunit protein uS11 from Methylorubrum populi (strain ATCC BAA-705 / NCIMB 13946 / BJ001) (Methylobacterium populi).